Consider the following 325-residue polypeptide: Small ribosomal subunit protein uS3 (325 aa).

The region spanning 38–106 is the KH type-2 domain; that stretch reads IRKMMSKGME…QVQLNILEVK (69 aa). The disordered stretch occupies residues 217-325; it reads EALLRQQRRE…AQGAPEKAEG (109 aa). Residues 222-232 show a composition bias toward basic residues; sequence QQRRERPRRGP. The span at 285–316 shows a compositional bias: low complexity; the sequence is TESAAVEGTPVETPAVTPETTAAPAAVTTAEA.

The protein belongs to the universal ribosomal protein uS3 family. Part of the 30S ribosomal subunit. Forms a tight complex with proteins S10 and S14.

In terms of biological role, binds the lower part of the 30S subunit head. Binds mRNA in the 70S ribosome, positioning it for translation. The sequence is that of Small ribosomal subunit protein uS3 from Parafrankia sp. (strain EAN1pec).